Consider the following 317-residue polypeptide: Adenine deaminase (317 aa).

Zn(2+)-binding residues include His-14, His-16, and His-194. The active-site Proton donor is Glu-197. Asp-275 provides a ligand contact to Zn(2+). Asp-276 is a binding site for substrate.

This sequence belongs to the metallo-dependent hydrolases superfamily. Adenosine and AMP deaminases family. Adenine deaminase type 2 subfamily. It depends on Zn(2+) as a cofactor.

The enzyme catalyses adenine + H2O + H(+) = hypoxanthine + NH4(+). Its function is as follows. Catalyzes the hydrolytic deamination of adenine to hypoxanthine. Plays an important role in the purine salvage pathway and in nitrogen catabolism. The polypeptide is Adenine deaminase (Pseudomonas fluorescens (strain Pf0-1)).